We begin with the raw amino-acid sequence, 273 residues long: Putative phosphoenolpyruvate synthase regulatory protein (273 aa).

153–160 (GVSRCGKT) provides a ligand contact to ADP.

It belongs to the pyruvate, phosphate/water dikinase regulatory protein family. PSRP subfamily.

The catalysed reaction is [pyruvate, water dikinase] + ADP = [pyruvate, water dikinase]-phosphate + AMP + H(+). The enzyme catalyses [pyruvate, water dikinase]-phosphate + phosphate + H(+) = [pyruvate, water dikinase] + diphosphate. Functionally, bifunctional serine/threonine kinase and phosphorylase involved in the regulation of the phosphoenolpyruvate synthase (PEPS) by catalyzing its phosphorylation/dephosphorylation. This Yersinia pseudotuberculosis serotype I (strain IP32953) protein is Putative phosphoenolpyruvate synthase regulatory protein.